A 216-amino-acid polypeptide reads, in one-letter code: Cytidylate kinase (216 aa).

Gly-7–Thr-15 contributes to the ATP binding site.

Belongs to the cytidylate kinase family. Type 1 subfamily.

Its subcellular location is the cytoplasm. It catalyses the reaction CMP + ATP = CDP + ADP. It carries out the reaction dCMP + ATP = dCDP + ADP. The polypeptide is Cytidylate kinase (Methylocella silvestris (strain DSM 15510 / CIP 108128 / LMG 27833 / NCIMB 13906 / BL2)).